Reading from the N-terminus, the 233-residue chain is Hydroxyacylglutathione hydrolase (233 aa).

7 residues coordinate Zn(2+): His52, His54, Asp56, His57, His108, Asp125, and His163.

The protein belongs to the metallo-beta-lactamase superfamily. Glyoxalase II family. In terms of assembly, monomer. It depends on Zn(2+) as a cofactor.

The catalysed reaction is an S-(2-hydroxyacyl)glutathione + H2O = a 2-hydroxy carboxylate + glutathione + H(+). Its pathway is secondary metabolite metabolism; methylglyoxal degradation; (R)-lactate from methylglyoxal: step 2/2. In terms of biological role, thiolesterase that catalyzes the hydrolysis of S-D-lactoyl-glutathione to form glutathione and D-lactic acid. This Pasteurella multocida (strain Pm70) protein is Hydroxyacylglutathione hydrolase.